The chain runs to 543 residues: EH domain-containing protein 2 (543 aa).

Ser3 carries the phosphoserine modification. The region spanning 55-286 (FDGKPMVLVA…DLFRDIQGLP (232 aa)) is the Dynamin-type G domain. Positions 65-72 (GQYSTGKT) are G1 motif. ATP is bound at residue 65-72 (GQYSTGKT). Positions 91–92 (EP) are G2 motif. A KPF loop; caveolar targeting motif is present at residues 120–122 (KPF). Positions 153–156 (DTPG) are G3 motif. The interval 219–222 (NKAD) is G4 motif. Residue Lys220 participates in ATP binding. Position 243 (Val243) is a region of interest, G5 motif. ATP is bound at residue Trp258. A mediates membrane-binding region spans residues 320–340 (SVFGKENKKKQLILKLPVIFA). 5 positions are modified to phosphoserine: Ser438, Ser468, Ser470, Ser484, and Ser493. The region spanning 449–537 (DKSKYDEIFY…RRLVPPSKRR (89 aa)) is the EH domain. One can recognise an EF-hand domain in the interval 481–516 (LPNSVLGRIWKLSDVDRDGMLDDEEFALASHLIEAK). Positions 494, 496, 498, 500, and 505 each coordinate Ca(2+). Residues 523–543 (PANLPRRLVPPSKRRHKGSAE) form a disordered region. A compositionally biased stretch (basic residues) spans 534 to 543 (SKRRHKGSAE).

The protein belongs to the TRAFAC class dynamin-like GTPase superfamily. Dynamin/Fzo/YdjA family. EHD subfamily. As to quaternary structure, homodimer and homooligomer. Interacts with EHD1. May also interact with EHD3 and EHD4. Interacts with MYOF. Interacts with EHBP1. Interacts with FER1L5 (via second C2 domain). Interacts with CAV1 in a cholesterol-dependent manner. Interacts (via EH domain) with PACSIN2 (via NPF motifs); this interaction probably stabilizes the caveolae. In terms of tissue distribution, highly expressed in heart and moderately expressed in placenta, lung, and skeletal muscle.

The protein localises to the cell membrane. It localises to the membrane. The protein resides in the caveola. It is found in the endosome membrane. Its subcellular location is the cytoplasm. The protein localises to the cytosol. Its activity is regulated as follows. The very low intrinsic ATPase activity is increased upon interaction with liposomes. ATP- and membrane-binding protein that controls membrane reorganization/tubulation upon ATP hydrolysis. Plays a role in membrane trafficking between the plasma membrane and endosomes. Important for the internalization of GLUT4. Required for fusion of myoblasts to skeletal muscle myotubes. Required for normal translocation of FER1L5 to the plasma membrane. Regulates the equilibrium between cell surface-associated and cell surface-dissociated caveolae by constraining caveolae at the cell membrane. This chain is EH domain-containing protein 2, found in Homo sapiens (Human).